A 184-amino-acid polypeptide reads, in one-letter code: MGNRLSKIATRTGDAGTTGLGDGSRVGKNSLRIVAIGDVDELNSHIGLLLTEPDLPEDVRAALLHIQHDLFDLGGELSIPGYTLLKAPQVAQLDDWLAHYNAALPRLAEFILPGGSRPAAQAHICRTVCRRAERALVELGAAEALNEAPRQYLNRLSDLLFVLARVLNRAGGGSDVLWQRERES.

The segment at 1–21 is disordered; sequence MGNRLSKIATRTGDAGTTGLG. ATP contacts are provided by residues 10–13, 18–19, Lys28, 130–134, and Asn154; these read TRTG, TG, and RRAER.

The protein belongs to the Cob(I)alamin adenosyltransferase family. Homotrimer.

The enzyme catalyses 2 cob(II)alamin + AH2 + 2 ATP = 2 adenosylcob(III)alamin + 2 triphosphate + A + 2 H(+). Its activity is regulated as follows. Is potentially allosterically regulated by GTP/GDP, which enhances its affinity for AdoCbl by 5-fold. Binds cob(II)alamin weakly in the absence of ATP. The presence of ATP (but not GTP or GDP) increases the affinity of cob(II)alamin for the enzyme, and stoichiometric binding is observed. GTP blocks the transfer of cob(II)alamin to IcmF from ATR, thus averting its reconstitution with inactive cofactor. In terms of biological role, adenosyltransferase that catalyzes the conversion of cob(II)alamin to adenosylcob(III)alamin (AdoCbl) in the presence of ATP and an electron donor. Acts as an accessory protein of IcmF that functions in cofactor repair, since IcmF is prone to inactivation during catalytic turnover due to the occasional loss of the 5'-deoxyadenosine moiety and formation of the inactive cob(II)alamin cofactor in its active site. Thus, receives and repairs the inactive cofactor, which is then reloaded onto IcmF in a GTPase-gated step. The chain is Cobalamin adenosyltransferase from Cupriavidus metallidurans (strain ATCC 43123 / DSM 2839 / NBRC 102507 / CH34) (Ralstonia metallidurans).